Consider the following 93-residue polypeptide: DNA-directed RNA polymerase subunit Rpo11 (93 aa).

It belongs to the archaeal Rpo11/eukaryotic RPB11/RPC19 RNA polymerase subunit family. Part of the RNA polymerase complex.

It is found in the cytoplasm. The enzyme catalyses RNA(n) + a ribonucleoside 5'-triphosphate = RNA(n+1) + diphosphate. Its function is as follows. DNA-dependent RNA polymerase (RNAP) catalyzes the transcription of DNA into RNA using the four ribonucleoside triphosphates as substrates. The polypeptide is DNA-directed RNA polymerase subunit Rpo11 (Methanocella arvoryzae (strain DSM 22066 / NBRC 105507 / MRE50)).